We begin with the raw amino-acid sequence, 61 residues long: Large ribosomal subunit protein bL32c (61 aa).

The interval 37 to 61 (SRSFSSGNEHPKPKGFSGQQQQTNK) is disordered.

This sequence belongs to the bacterial ribosomal protein bL32 family.

The protein localises to the plastid. It is found in the chloroplast. The sequence is that of Large ribosomal subunit protein bL32c from Agrostis stolonifera (Creeping bentgrass).